Reading from the N-terminus, the 86-residue chain is Large ribosomal subunit protein bL27 (86 aa).

Belongs to the bacterial ribosomal protein bL27 family.

This is Large ribosomal subunit protein bL27 from Flavobacterium johnsoniae (strain ATCC 17061 / DSM 2064 / JCM 8514 / BCRC 14874 / CCUG 350202 / NBRC 14942 / NCIMB 11054 / UW101) (Cytophaga johnsonae).